Here is a 1155-residue protein sequence, read N- to C-terminus: Agglutinin-like protein 3 (1155 aa).

The signal sequence occupies residues 1 to 17; it reads MLQQYTLLLIYLSVATA. 4 cysteine pairs are disulfide-bonded: C73–C150, C96–C112, C205–C298, and C227–C256. ALS repeat units lie at residues 365–396, 401–432, and 438–469; these read TTIT…VDIP, TTVT…VQVP, and VTTT…IREP. N-linked (GlcNAc...) asparagine glycosylation is present at N471. 2 ALS repeats span residues 474-505 and 510-541; these read VTTT…IKEP and VTTT…IREP. N543 carries N-linked (GlcNAc...) asparagine glycosylation. 2 ALS repeats span residues 546–577 and 582–613; these read VTTT…IREP. The N-linked (GlcNAc...) asparagine glycan is linked to N615. Residues 618–649 form an ALS 8 repeat; that stretch reads VTTTEYWSQSYATTTTITAPPGETDTVLIREP. A glycan (N-linked (GlcNAc...) asparagine) is linked at N651. ALS repeat units follow at residues 654-685 and 690-721; these read VTTT…IKEP and VTTT…IREP. Residue N723 is glycosylated (N-linked (GlcNAc...) asparagine). An ALS 11 repeat occupies 726–757; that stretch reads VTTTEYWSQSYATTTTITAPPGETDTVLIREP. An N-linked (GlcNAc...) asparagine glycan is attached at N759. The ALS 12 repeat unit spans residues 762 to 793; sequence VTTTEYWSQSFATTTTVTAPPGGTDTVIIREP. N-linked (GlcNAc...) asparagine glycosylation is present at N795. ALS repeat units follow at residues 798-829 and 834-863; these read VTTT…IREP and VTTT…VIIY. A glycan (N-linked (GlcNAc...) asparagine) is linked at N881. A disordered region spans residues 936 to 1115; it reads TTTESTLQSP…NSDTQQTTLS (180 aa). The span at 949–965 shows a compositional bias: low complexity; it reads FSESGVSVETESSTFTT. Positions 966 to 977 are enriched in polar residues; the sequence is AQTNPSVPTTES. Positions 1010-1019 are enriched in low complexity; it reads TTSTAASTST. N-linked (GlcNAc...) asparagine glycosylation occurs at N1023. 2 stretches are compositionally biased toward low complexity: residues 1034–1058 and 1071–1115; these read ASSP…STSV and APSA…TTLS. Residue N1099 is glycosylated (N-linked (GlcNAc...) asparagine). Residue S1134 is the site of GPI-anchor amidated serine attachment. Positions 1135-1155 are cleaved as a propeptide — removed in mature form; that stretch reads GSVIQHSTWLCGLITLLSLFI.

Belongs to the ALS family. Post-translationally, the GPI-anchor is attached to the protein in the endoplasmic reticulum and serves to target the protein to the cell surface. There, the glucosamine-inositol phospholipid moiety is cleaved off and the GPI-modified mannoprotein is covalently attached via its lipidless GPI glycan remnant to the 1,6-beta-glucan of the outer cell wall layer.

Its subcellular location is the cell membrane. The protein resides in the secreted. The protein localises to the cell wall. In terms of biological role, cell surface adhesion protein which mediates both yeast-to-host tissue adherence and yeast aggregation. Plays an important role in the biofilm formation and pathogenesis of C.albicans infections. Necessary for C.albicans to bind to N-cadherin on endothelial cells and E-cadherin on oral epithelial cells and subsequent endocytosis by these cells. During disseminated infection, mediates initial trafficking to the brain and renal cortex and contributes to fungal persistence in the kidneys. This Candida albicans (strain SC5314 / ATCC MYA-2876) (Yeast) protein is Agglutinin-like protein 3 (ALS3).